A 219-amino-acid polypeptide reads, in one-letter code: Resolvase (219 aa).

The Resolvase/invertase-type recombinase catalytic domain occupies 15–159 (VARIYLRAST…EDRRERQRQG (145 aa)). Serine 23 acts as the O-(5'-phospho-DNA)-serine intermediate in catalysis.

Belongs to the site-specific recombinase resolvase family.

Its function is as follows. Involved in plasmid partition. The chain is Resolvase (parA) from Escherichia coli.